Consider the following 737-residue polypeptide: Catalase-peroxidase (737 aa).

The segment at residues 89-219 (WHSAGTYRVF…LAASHMGLIY (131 aa)) is a cross-link (tryptophyl-tyrosyl-methioninium (Trp-Tyr) (with M-245)). The Proton acceptor role is filled by histidine 90. Positions 219–245 (YVNPEGPNGNPDPKAAARDIRVTFGRM) form a cross-link, tryptophyl-tyrosyl-methioninium (Tyr-Met) (with W-89). Histidine 260 lines the heme b pocket.

This sequence belongs to the peroxidase family. Peroxidase/catalase subfamily. In terms of assembly, homodimer or homotetramer. Heme b is required as a cofactor. Formation of the three residue Trp-Tyr-Met cross-link is important for the catalase, but not the peroxidase activity of the enzyme.

Its subcellular location is the cytoplasm. The enzyme catalyses H2O2 + AH2 = A + 2 H2O. The catalysed reaction is 2 H2O2 = O2 + 2 H2O. Bifunctional enzyme with both catalase and broad-spectrum peroxidase activity. In Aspergillus terreus (strain NIH 2624 / FGSC A1156), this protein is Catalase-peroxidase.